We begin with the raw amino-acid sequence, 485 residues long: Glutamate--tRNA ligase (485 aa).

The short motif at 12–22 (PSPTGYMHIGN) is the 'HIGH' region element. The short motif at 253-257 (KLSKR) is the 'KMSKS' region element. Lys-256 contributes to the ATP binding site.

Belongs to the class-I aminoacyl-tRNA synthetase family. Glutamate--tRNA ligase type 1 subfamily. Monomer.

It is found in the cytoplasm. It carries out the reaction tRNA(Glu) + L-glutamate + ATP = L-glutamyl-tRNA(Glu) + AMP + diphosphate. Functionally, catalyzes the attachment of glutamate to tRNA(Glu) in a two-step reaction: glutamate is first activated by ATP to form Glu-AMP and then transferred to the acceptor end of tRNA(Glu). This is Glutamate--tRNA ligase from Clostridium acetobutylicum (strain ATCC 824 / DSM 792 / JCM 1419 / IAM 19013 / LMG 5710 / NBRC 13948 / NRRL B-527 / VKM B-1787 / 2291 / W).